Reading from the N-terminus, the 366-residue chain is Peptide chain release factor 2 (366 aa).

Gln253 carries the N5-methylglutamine modification.

This sequence belongs to the prokaryotic/mitochondrial release factor family. Post-translationally, methylated by PrmC. Methylation increases the termination efficiency of RF2.

It localises to the cytoplasm. In terms of biological role, peptide chain release factor 2 directs the termination of translation in response to the peptide chain termination codons UGA and UAA. The protein is Peptide chain release factor 2 of Yersinia pestis.